The following is a 176-amino-acid chain: Thiol:disulfide interchange protein HelX (176 aa).

A signal peptide spans 1-19 (MAKPLMFLPLLVMAGFVGA). One can recognise a Thioredoxin domain in the interval 35 to 172 (ALAGKEAPAV…ITKKIDPLLA (138 aa)). A disulfide bridge links cysteine 75 with cysteine 78.

It belongs to the thioredoxin family. DsbE subfamily.

It localises to the periplasm. Required for disulfide bond formation in some periplasmic proteins. Also acts as a disulfide oxidoreductase in cytochromes c biogenesis. The cysteines of apocytochromes c must be in the reduced state for covalent linkage between the two moieties to occur. The polypeptide is Thiol:disulfide interchange protein HelX (helX) (Rhodobacter capsulatus (strain ATCC BAA-309 / NBRC 16581 / SB1003)).